Here is a 76-residue protein sequence, read N- to C-terminus: uncharacterized protein (76 aa).

The N-terminal stretch at 1–20 is a signal peptide; sequence MKNAVLVFLLLSVFALSVNA.

As to expression, prismatic layer of shell (at protein level). Expressed primarily in the mantle with equal levels in the mantle edge and the mantle pallium.

The protein localises to the secreted. This is an uncharacterized protein from Margaritifera margaritifera (Freshwater pearl mussel).